We begin with the raw amino-acid sequence, 402 residues long: Propionate kinase (402 aa).

Residues N11 and K18 each coordinate ATP. N11 is a binding site for Mg(2+). R86 contacts substrate. D143 (proton donor/acceptor) is an active-site residue. ATP-binding positions include H175, 203–207 (HLGNG), 278–280 (DLR), and 326–330 (GIGEN).

Belongs to the acetokinase family. TdcD subfamily. Homodimer. Mg(2+) is required as a cofactor.

It carries out the reaction propanoate + ATP = propanoyl phosphate + ADP. It functions in the pathway amino-acid degradation; L-threonine degradation via propanoate pathway; propanoate from L-threonine: step 4/4. Its function is as follows. Catalyzes the conversion of propionyl phosphate and ADP to propionate and ATP. This chain is Propionate kinase, found in Enterobacter sp. (strain 638).